The sequence spans 400 residues: tRNA(Met) cytidine acetate ligase (400 aa).

ATP contacts are provided by residues 7-20 (IVEY…HLYH), G101, N159, and 184-185 (RI).

Belongs to the TmcAL family.

The protein localises to the cytoplasm. The enzyme catalyses cytidine(34) in elongator tRNA(Met) + acetate + ATP = N(4)-acetylcytidine(34) in elongator tRNA(Met) + AMP + diphosphate. In terms of biological role, catalyzes the formation of N(4)-acetylcytidine (ac(4)C) at the wobble position of elongator tRNA(Met), using acetate and ATP as substrates. First activates an acetate ion to form acetyladenylate (Ac-AMP) and then transfers the acetyl group to tRNA to form ac(4)C34. The polypeptide is tRNA(Met) cytidine acetate ligase (Caldicellulosiruptor bescii (strain ATCC BAA-1888 / DSM 6725 / KCTC 15123 / Z-1320) (Anaerocellum thermophilum)).